A 467-amino-acid polypeptide reads, in one-letter code: Chromosomal replication initiator protein DnaA (467 aa).

The interval methionine 1–alanine 90 is domain I, interacts with DnaA modulators. A domain II region spans residues valine 91–serine 130. Positions alanine 97–proline 111 are enriched in low complexity. Residues alanine 97–asparagine 119 are disordered. Residues asparagine 131 to alanine 347 form a domain III, AAA+ region region. ATP-binding residues include glycine 175, glycine 177, lysine 178, and threonine 179. Residues asparagine 348–serine 467 form a domain IV, binds dsDNA region.

Belongs to the DnaA family. Oligomerizes as a right-handed, spiral filament on DNA at oriC.

Its subcellular location is the cytoplasm. In terms of biological role, plays an essential role in the initiation and regulation of chromosomal replication. ATP-DnaA binds to the origin of replication (oriC) to initiate formation of the DNA replication initiation complex once per cell cycle. Binds the DnaA box (a 9 base pair repeat at the origin) and separates the double-stranded (ds)DNA. Forms a right-handed helical filament on oriC DNA; dsDNA binds to the exterior of the filament while single-stranded (ss)DNA is stabiized in the filament's interior. The ATP-DnaA-oriC complex binds and stabilizes one strand of the AT-rich DNA unwinding element (DUE), permitting loading of DNA polymerase. After initiation quickly degrades to an ADP-DnaA complex that is not apt for DNA replication. Binds acidic phospholipids. This chain is Chromosomal replication initiator protein DnaA, found in Escherichia coli O157:H7.